Reading from the N-terminus, the 425-residue chain is Probable threonylcarbamoyladenosine tRNA methylthiotransferase (425 aa).

One can recognise an MTTase N-terminal domain in the interval 2–110 (VKVYIENYGC…IVQAVEYAMR (109 aa)). Residues C11, C47, C76, C148, C152, and C155 each contribute to the [4Fe-4S] cluster site. The Radical SAM core domain maps to 134-363 (SPRNVYFILP…HRIRLQISYE (230 aa)). One can recognise a TRAM domain in the interval 366 to 425 (RKYIGKKVKVLIHGEGKKGNVDAVTMNYKHIILPEGRKGEFREARVKNAASTYLLGEIIT).

This sequence belongs to the methylthiotransferase family. CDKAL1 subfamily. [4Fe-4S] cluster is required as a cofactor.

It carries out the reaction N(6)-L-threonylcarbamoyladenosine(37) in tRNA + (sulfur carrier)-SH + AH2 + 2 S-adenosyl-L-methionine = 2-methylsulfanyl-N(6)-L-threonylcarbamoyladenosine(37) in tRNA + (sulfur carrier)-H + 5'-deoxyadenosine + L-methionine + A + S-adenosyl-L-homocysteine + 2 H(+). Functionally, catalyzes the methylthiolation of N6-threonylcarbamoyladenosine (t(6)A), leading to the formation of 2-methylthio-N6-threonylcarbamoyladenosine (ms(2)t(6)A) at position 37 in tRNAs that read codons beginning with adenine. The sequence is that of Probable threonylcarbamoyladenosine tRNA methylthiotransferase from Pyrococcus horikoshii (strain ATCC 700860 / DSM 12428 / JCM 9974 / NBRC 100139 / OT-3).